The following is a 709-amino-acid chain: Solute carrier family 15 member 1 (709 aa).

Residues Met1–Val21 traverse the membrane as a helical segment. Residues Asn22–Thr53 lie on the Extracellular side of the membrane. Asn50 carries N-linked (GlcNAc...) asparagine glycosylation. A helical membrane pass occupies residues Ala54–Ala74. The Cytoplasmic portion of the chain corresponds to Asp75–Lys82. The helical transmembrane segment at Thr83–Ile103 threads the bilayer. At Asn104–Leu118 the chain is on the extracellular side. The helical transmembrane segment at Pro119–Ile139 threads the bilayer. The Cytoplasmic segment spans residues Lys140–Arg161. The chain crosses the membrane as a helical span at residues Phe162 to Pro182. The Extracellular portion of the chain corresponds to Ile183–Tyr198. A helical transmembrane segment spans residues Pro199–Gly219. At Ser220–Gln276 the chain is on the cytoplasmic side. Residues Ile277 to Phe297 form a helical membrane-spanning segment. Over Asp298–Thr327 the chain is Extracellular. A helical transmembrane segment spans residues Val328 to Ile348. The Cytoplasmic portion of the chain corresponds to Ala349–Met361. The chain crosses the membrane as a helical span at residues Thr362 to Ile382. Residues Asp383–Gln585 lie on the Extracellular side of the membrane. The extracellular domain (ECD) stretch occupies residues Asp383 to Gln585. 4 N-linked (GlcNAc...) asparagine glycosylation sites follow: Asn406, Asn439, Asn515, and Asn532. A helical membrane pass occupies residues Ile586–Phe606. The Cytoplasmic segment spans residues Ser607–Gln620. A helical transmembrane segment spans residues Ala621–Gly641. At His642–Gln646 the chain is on the extracellular side. Residues Trp647–Met667 traverse the membrane as a helical segment. The Cytoplasmic portion of the chain corresponds to Ala668–Met709. A disordered region spans residues Lys690–Met709. The segment covering Pro697–Met709 has biased composition (polar residues).

It belongs to the major facilitator superfamily. Proton-dependent oligopeptide transporter (POT/PTR) (TC 2.A.17) family. As to quaternary structure, interacts (via extracellular domain region) with trypsin.

It is found in the apical cell membrane. It catalyses the reaction a dipeptide(out) + H(+)(out) = a dipeptide(in) + H(+)(in). The enzyme catalyses an L-amino acid tripeptide(out) + H(+)(out) = an L-amino acid tripeptide(in) + H(+)(in). The catalysed reaction is L-alanyl-L-lysine(out) + H(+)(out) = L-alanyl-L-lysine(in) + H(+)(in). It carries out the reaction L-alanyl-L-proline(out) + H(+)(out) = L-alanyl-L-proline(in) + H(+)(in). It catalyses the reaction L-alanyl-L-valine(out) + H(+)(out) = L-alanyl-L-valine(in) + H(+)(in). The enzyme catalyses carnosine(out) + H(+)(out) = carnosine(in) + H(+)(in). The catalysed reaction is glycyl-L-glutamine(out) + H(+)(out) = glycyl-L-glutamine(in) + H(+)(in). It carries out the reaction glycyl-L-leucine(out) + H(+)(out) = glycyl-L-leucine(in) + H(+)(in). It catalyses the reaction glycyl-L-proline(out) + H(+)(out) = glycyl-L-proline(in) + H(+)(in). The enzyme catalyses glycyl-sarcosine(out) + H(+)(out) = glycyl-sarcosine(in) + H(+)(in). The catalysed reaction is L-leucyl-L-leucine(out) + H(+)(out) = L-leucyl-L-leucine(in) + H(+)(in). It carries out the reaction L-leucyl-L-proline(out) + H(+)(out) = L-leucyl-L-proline(in) + H(+)(in). It catalyses the reaction L-phenylalanyl-L-leucine(out) + H(+)(out) = L-phenylalanyl-L-leucine(in) + H(+)(in). The enzyme catalyses L-phenylalanyl-L-phenylalanine(out) + H(+)(out) = L-phenylalanyl-L-phenylalanine(in) + H(+)(in). The catalysed reaction is L-lysyl-glycine(out) + H(+)(out) = L-lysyl-glycine(in) + H(+)(in). It carries out the reaction L-tyrosylglycine(out) + H(+)(out) = L-tyrosylglycine(in) + H(+)(in). It catalyses the reaction L-alanyl-L-aspartate(out) + 2 H(+)(out) = L-alanyl-L-aspartate(in) + 2 H(+)(in). The enzyme catalyses L-aspartyl-glycine(out) + 2 H(+)(out) = L-aspartyl-glycine(in) + 2 H(+)(in). The catalysed reaction is glycyl-L-aspartate(out) + 2 H(+)(out) = glycyl-L-aspartate(in) + 2 H(+)(in). It carries out the reaction glycyl-L-glutamate(out) + 2 H(+)(out) = glycyl-L-glutamate(in) + 2 H(+)(in). It catalyses the reaction L-alanyl-L-leucyl-L-alanine(out) + H(+)(out) = L-alanyl-L-leucyl-L-alanine(in) + H(+)(in). The enzyme catalyses L-alanyl-L-prolylglycine(out) + H(+)(out) = L-alanyl-L-prolylglycine(in) + H(+)(in). The catalysed reaction is glycylglycyl-L-isoleucine(out) + H(+)(out) = glycylglycyl-L-isoleucine(in) + H(+)(in). It carries out the reaction glycylglycyl-L-proline(out) + H(+)(out) = glycylglycyl-L-proline(in) + H(+)(in). It catalyses the reaction L-methionyl-L-phenylalanyl-L-methionine(out) + H(+)(out) = L-methionyl-L-phenylalanyl-L-methionine(in) + H(+)(in). The enzyme catalyses N-acetyl-D-muramoyl-L-alanyl-D-isoglutamine(out) + 2 H(+)(out) = N-acetyl-D-muramoyl-L-alanyl-D-isoglutamine(in) + 2 H(+)(in). The catalysed reaction is N(alpha)-formyl-L-methionyl-L-leucyl-L-phenylalanine(out) + 2 H(+)(out) = N(alpha)-formyl-L-methionyl-L-leucyl-L-phenylalanine(in) + 2 H(+)(in). Functionally, electrogenic proton-coupled amino-acid transporter that transports oligopeptides of 2 to 4 amino acids with a preference for dipeptides. Transports neutral and monovalently charged peptides with a proton to peptide stoichiometry of 1:1 or 2:1. Primarily responsible for the absorption of dietary di- and tripeptides from the small intestinal lumen. Mediates transepithelial transport of muramyl and N-formylated bacterial dipeptides contributing to recognition of pathogenic bacteria by the mucosal immune system. This chain is Solute carrier family 15 member 1, found in Mus musculus (Mouse).